A 170-amino-acid chain; its full sequence is MMQILLLALAVSLACADSIDYSKVPGNWRTIAIAADHVEKIEVNGELRAYFRQVDCTEGCDKISITFYTNTDGVCTEHTVVGARNGENDVYTVDYAGENTFQILCNSDDAFVIGSVNTDQNGQTTKEVAIAAKRNFLTPEQEQKFQKAVQNAGIPLENIRYVIETDTCPD.

Positions 1-16 (MMQILLLALAVSLACA) are cleaved as a signal peptide. Disulfide bonds link Cys56-Cys60 and Cys75-Cys168.

It belongs to the calycin superfamily. Lipocalin family. In terms of processing, not N-linked glycosylated. Expressed in harderian gland (at protein level). Expressed in hair (at protein level). Expressed in submaxillary gland and harderian gland.

Its subcellular location is the secreted. The chain is Lipocalin Cav p 2.0101 (Lcncavp2) from Cavia porcellus (Guinea pig).